The chain runs to 166 residues: Small ribosomal subunit protein uS5 (166 aa).

An S5 DRBM domain is found at 11–74 (LEDRVVSINR…EDAKKNLINV (64 aa)).

The protein belongs to the universal ribosomal protein uS5 family. As to quaternary structure, part of the 30S ribosomal subunit. Contacts proteins S4 and S8.

Its function is as follows. With S4 and S12 plays an important role in translational accuracy. Located at the back of the 30S subunit body where it stabilizes the conformation of the head with respect to the body. The chain is Small ribosomal subunit protein uS5 from Latilactobacillus sakei subsp. sakei (strain 23K) (Lactobacillus sakei subsp. sakei).